The sequence spans 458 residues: ATP synthase subunit beta (458 aa).

Position 148–155 (148–155 (GGAGVGKT)) interacts with ATP.

This sequence belongs to the ATPase alpha/beta chains family. In terms of assembly, F-type ATPases have 2 components, CF(1) - the catalytic core - and CF(0) - the membrane proton channel. CF(1) has five subunits: alpha(3), beta(3), gamma(1), delta(1), epsilon(1). CF(0) has three main subunits: a(1), b(2) and c(9-12). The alpha and beta chains form an alternating ring which encloses part of the gamma chain. CF(1) is attached to CF(0) by a central stalk formed by the gamma and epsilon chains, while a peripheral stalk is formed by the delta and b chains.

The protein localises to the cell inner membrane. The enzyme catalyses ATP + H2O + 4 H(+)(in) = ADP + phosphate + 5 H(+)(out). Produces ATP from ADP in the presence of a proton gradient across the membrane. The catalytic sites are hosted primarily by the beta subunits. This is ATP synthase subunit beta from Francisella tularensis subsp. holarctica (strain FTNF002-00 / FTA).